A 1402-amino-acid polypeptide reads, in one-letter code: DNA-directed RNA polymerase subunit beta' (1402 aa).

Positions 71, 73, 86, and 89 each coordinate Zn(2+). Residues D462, D464, and D466 each coordinate Mg(2+). Zn(2+) contacts are provided by C808, C881, C888, and C891.

It belongs to the RNA polymerase beta' chain family. In terms of assembly, the RNAP catalytic core consists of 2 alpha, 1 beta, 1 beta' and 1 omega subunit. When a sigma factor is associated with the core the holoenzyme is formed, which can initiate transcription. Mg(2+) is required as a cofactor. Zn(2+) serves as cofactor.

The catalysed reaction is RNA(n) + a ribonucleoside 5'-triphosphate = RNA(n+1) + diphosphate. In terms of biological role, DNA-dependent RNA polymerase catalyzes the transcription of DNA into RNA using the four ribonucleoside triphosphates as substrates. In Hyphomonas neptunium (strain ATCC 15444), this protein is DNA-directed RNA polymerase subunit beta'.